The sequence spans 332 residues: Methionine import ATP-binding protein MetN (332 aa).

The ABC transporter domain occupies 2–241 (IELKGLTKVF…PGSRLRELFY (240 aa)). ATP is bound at residue 38–45 (GQSGAGKS).

Belongs to the ABC transporter superfamily. Methionine importer (TC 3.A.1.24) family. As to quaternary structure, the complex is composed of two ATP-binding proteins (MetN), two transmembrane proteins (MetI) and a solute-binding protein (MetQ).

It localises to the cell membrane. The catalysed reaction is L-methionine(out) + ATP + H2O = L-methionine(in) + ADP + phosphate + H(+). It carries out the reaction D-methionine(out) + ATP + H2O = D-methionine(in) + ADP + phosphate + H(+). Part of the ABC transporter complex MetNIQ involved in methionine import. Responsible for energy coupling to the transport system. The polypeptide is Methionine import ATP-binding protein MetN (Symbiobacterium thermophilum (strain DSM 24528 / JCM 14929 / IAM 14863 / T)).